The primary structure comprises 337 residues: Pyrophosphate--fructose 6-phosphate 1-phosphotransferase (337 aa).

Glycine 10 provides a ligand contact to diphosphate. Aspartate 101 serves as a coordination point for Mg(2+). Substrate contacts are provided by residues 124–126 (TID), arginine 161, 168–170 (MGR), glutamate 220, arginine 257, and 263–266 (HTIR). Catalysis depends on aspartate 126, which acts as the Proton acceptor.

The protein belongs to the phosphofructokinase type A (PFKA) family. Mixed-substrate PFK group III subfamily. Homodimer or homotrimer. Mg(2+) serves as cofactor.

It localises to the cytoplasm. It carries out the reaction beta-D-fructose 6-phosphate + diphosphate = beta-D-fructose 1,6-bisphosphate + phosphate + H(+). It functions in the pathway carbohydrate degradation; glycolysis; D-glyceraldehyde 3-phosphate and glycerone phosphate from D-glucose: step 3/4. Its activity is regulated as follows. Non-allosteric. In terms of biological role, catalyzes the phosphorylation of D-fructose 6-phosphate, the first committing step of glycolysis. Uses inorganic phosphate (PPi) as phosphoryl donor instead of ATP like common ATP-dependent phosphofructokinases (ATP-PFKs), which renders the reaction reversible, and can thus function both in glycolysis and gluconeogenesis. Consistently, PPi-PFK can replace the enzymes of both the forward (ATP-PFK) and reverse (fructose-bisphosphatase (FBPase)) reactions. This chain is Pyrophosphate--fructose 6-phosphate 1-phosphotransferase, found in Thermoproteus tenax (strain ATCC 35583 / DSM 2078 / JCM 9277 / NBRC 100435 / Kra 1).